The primary structure comprises 183 residues: Cell division protein ZapC (183 aa).

Belongs to the ZapC family. Interacts directly with FtsZ.

Its subcellular location is the cytoplasm. Its function is as follows. Contributes to the efficiency of the cell division process by stabilizing the polymeric form of the cell division protein FtsZ. Acts by promoting interactions between FtsZ protofilaments and suppressing the GTPase activity of FtsZ. The chain is Cell division protein ZapC from Proteus mirabilis (strain HI4320).